We begin with the raw amino-acid sequence, 134 residues long: Small ribosomal subunit protein uS11 (134 aa).

The protein belongs to the universal ribosomal protein uS11 family. As to quaternary structure, part of the 30S ribosomal subunit. Interacts with proteins S7 and S18. Binds to IF-3.

In terms of biological role, located on the platform of the 30S subunit, it bridges several disparate RNA helices of the 16S rRNA. Forms part of the Shine-Dalgarno cleft in the 70S ribosome. The protein is Small ribosomal subunit protein uS11 of Acidovorax ebreus (strain TPSY) (Diaphorobacter sp. (strain TPSY)).